Here is a 379-residue protein sequence, read N- to C-terminus: tRNA-specific 2-thiouridylase MnmA (379 aa).

ATP-binding positions include 6-13 (AMSGGVDS) and L32. C101 serves as the catalytic Nucleophile. The cysteines at positions 101 and 199 are disulfide-linked. G125 serves as a coordination point for ATP. An interaction with tRNA region spans residues 148-150 (KDQ). Catalysis depends on C199, which acts as the Cysteine persulfide intermediate.

This sequence belongs to the MnmA/TRMU family.

It is found in the cytoplasm. The catalysed reaction is S-sulfanyl-L-cysteinyl-[protein] + uridine(34) in tRNA + AH2 + ATP = 2-thiouridine(34) in tRNA + L-cysteinyl-[protein] + A + AMP + diphosphate + H(+). Its function is as follows. Catalyzes the 2-thiolation of uridine at the wobble position (U34) of tRNA, leading to the formation of s(2)U34. The protein is tRNA-specific 2-thiouridylase MnmA of Paenarthrobacter aurescens (strain TC1).